The following is a 138-amino-acid chain: Large ribosomal subunit protein uL16 (138 aa).

The span at 1–13 shows a compositional bias: basic residues; sequence MLQPARRKYRKEQ. A disordered region spans residues 1 to 22; it reads MLQPARRKYRKEQKGRNTGVAT.

The protein belongs to the universal ribosomal protein uL16 family. As to quaternary structure, part of the 50S ribosomal subunit.

Functionally, binds 23S rRNA and is also seen to make contacts with the A and possibly P site tRNAs. The sequence is that of Large ribosomal subunit protein uL16 from Paracidovorax citrulli (strain AAC00-1) (Acidovorax citrulli).